A 1360-amino-acid chain; its full sequence is Activating molecule in BECN1-regulated autophagy protein 1B (1360 aa).

3 WD repeats span residues 50–89 (DNPRSTFLLAFSPDRNLVASTHVNHNIYITDVKTGKCLHS), 92–132 (GHRR…ESWF), and 134–174 (ESNV…AVVK). Polar residues predominate over residues 249–258 (RSSGAQANDQ). Disordered stretches follow at residues 249 to 277 (RSSGAQANDQSRPAPEPREPPSIPRFQYP), 315 to 364 (PTGL…NSAH), 412 to 490 (GVET…QRNN), 514 to 573 (ELER…RCRS), 587 to 616 (WERSGQTSSSSSSQEGPSWPLSVPPFEDPG), 664 to 688 (PTVSASSEAAEDALNPEVPVDNPDE), and 754 to 796 (TLSN…MPRN). The span at 319–333 (QPSDSTQPQTQSGPS) shows a compositional bias: low complexity. Polar residues predominate over residues 350–361 (AFSSVFSGTAGN). Residues 428–437 (SSSSMDLLSL) are compositionally biased toward low complexity. Composition is skewed to polar residues over residues 443–454 (GSSSSPIYTSAT) and 473–490 (DGTSSGHHPFYDNTQRNN). Positions 590 to 607 (SGQTSSSSSSQEGPSWPL) are enriched in low complexity. Residues 754-768 (TLSNSQADSQSNNPS) show a composition bias toward polar residues. The span at 775 to 784 (SDGDYEDIEE) shows a compositional bias: acidic residues. Short sequence motifs (TQT motif) lie at residues 1109 to 1111 (TQT) and 1121 to 1123 (TQT). 2 disordered regions span residues 1120 to 1142 (ETQTERELPSASTFQNTHTTSRH) and 1241 to 1360 (SQTS…LYGR). Composition is skewed to polar residues over residues 1129–1142 (SASTFQNTHTTSRH) and 1241–1252 (SQTSVRTAQGGN). Low complexity predominate over residues 1278 to 1288 (APGPSGSSGAP). Basic and acidic residues predominate over residues 1311 to 1321 (FGDRQPDDVQR). Low complexity predominate over residues 1329-1347 (NMSNHSNNNNNDHSNSYSE). Basic and acidic residues predominate over residues 1348–1360 (SRSRDYPDDLYGR).

This sequence belongs to the WD repeat AMBRA1 family. Component of the DCX(AMBRA1) E3 ubiquitin ligase complex.

It is found in the endoplasmic reticulum. It localises to the cytoplasm. The protein localises to the cytoskeleton. Its subcellular location is the cytoplasmic vesicle. The protein resides in the autophagosome. It is found in the mitochondrion. It localises to the cytosol. The protein localises to the nucleus. Its subcellular location is the cell junction. The protein resides in the focal adhesion. It participates in protein modification; protein ubiquitination. Its function is as follows. Substrate-recognition component of a DCX (DDB1-CUL4-X-box) E3 ubiquitin-protein ligase complex involved in cell cycle control and autophagy. The DCX(AMBRA1) complex specifically mediates the polyubiquitination of target proteins. Acts as an upstream master regulator of the transition from G1 to S cell phase: ambra1b specifically recognizes and binds phosphorylated cyclin-D (ccnd1, ccnd2 and ccnd3), leading to cyclin-D ubiquitination by the DCX(AMBRA1) complex and subsequent degradation. Acts as a regulator of Cul5-RING (CRL5) E3 ubiquitin-protein ligase complexes by mediating ubiquitination and degradation of Elongin-C (eloc) component of CRL5 complexes. Acts as a key regulator of autophagy by modulating the BECN1-PIK3C3 complex: controls protein turnover during neuronal development, and regulates normal cell survival and proliferation. In normal conditions, ambra1b is tethered to the cytoskeleton via interaction with dyneins light chains. Upon autophagy induction, ambra1b is released from the cytoskeletal docking site to induce autophagosome nucleation by mediating ubiquitination of proteins involved in autophagy. Also acts as an activator of mitophagy. Required for skeletal muscle development. The sequence is that of Activating molecule in BECN1-regulated autophagy protein 1B from Danio rerio (Zebrafish).